The following is a 552-amino-acid chain: Oxygen-dependent choline dehydrogenase (552 aa).

7-36 is an FAD binding site; the sequence is DYIIIGAGSAGNVLAARLTEDKDTTVLLLE. His477 functions as the Proton acceptor in the catalytic mechanism.

The protein belongs to the GMC oxidoreductase family. The cofactor is FAD.

It catalyses the reaction choline + A = betaine aldehyde + AH2. The enzyme catalyses betaine aldehyde + NAD(+) + H2O = glycine betaine + NADH + 2 H(+). It functions in the pathway amine and polyamine biosynthesis; betaine biosynthesis via choline pathway; betaine aldehyde from choline (cytochrome c reductase route): step 1/1. Its function is as follows. Involved in the biosynthesis of the osmoprotectant glycine betaine. Catalyzes the oxidation of choline to betaine aldehyde and betaine aldehyde to glycine betaine at the same rate. This is Oxygen-dependent choline dehydrogenase from Acinetobacter baumannii (strain AB307-0294).